The primary structure comprises 260 residues: Type III pantothenate kinase (260 aa).

6–13 is an ATP binding site; it reads DVGNTNIT. 107–110 contributes to the substrate binding site; the sequence is GADR. The Proton acceptor role is filled by Asp-109. K(+) is bound at residue Asp-129. Thr-132 provides a ligand contact to ATP. Residue Thr-184 coordinates substrate.

This sequence belongs to the type III pantothenate kinase family. As to quaternary structure, homodimer. The cofactor is NH4(+). K(+) is required as a cofactor.

It is found in the cytoplasm. The catalysed reaction is (R)-pantothenate + ATP = (R)-4'-phosphopantothenate + ADP + H(+). It participates in cofactor biosynthesis; coenzyme A biosynthesis; CoA from (R)-pantothenate: step 1/5. Functionally, catalyzes the phosphorylation of pantothenate (Pan), the first step in CoA biosynthesis. This is Type III pantothenate kinase from Agathobacter rectalis (strain ATCC 33656 / DSM 3377 / JCM 17463 / KCTC 5835 / VPI 0990) (Eubacterium rectale).